We begin with the raw amino-acid sequence, 115 residues long: Large ribosomal subunit protein bL21 (115 aa).

The protein belongs to the bacterial ribosomal protein bL21 family. In terms of assembly, part of the 50S ribosomal subunit. Contacts protein L20.

In terms of biological role, this protein binds to 23S rRNA in the presence of protein L20. In Coxiella burnetii (strain RSA 331 / Henzerling II), this protein is Large ribosomal subunit protein bL21.